Here is a 904-residue protein sequence, read N- to C-terminus: uncharacterized protein (904 aa).

Disordered regions lie at residues 247–275 and 328–360; these read KIGKSRTTEDVSMPPLHRGVGTPANSLEF and GDSQTPGLHYPPTAGAQTLSPTSHPSSANHHFS. The span at 342 to 360 shows a compositional bias: polar residues; it reads GAQTLSPTSHPSSANHHFS. The helical transmembrane segment at 778–798 threads the bilayer; the sequence is VVQGMILMFAGGKLIFGGRVL.

The protein resides in the membrane. This is an uncharacterized protein from Homo sapiens (Human).